Reading from the N-terminus, the 473-residue chain is 3-isopropylmalate dehydratase large subunit (473 aa).

3 residues coordinate [4Fe-4S] cluster: C351, C414, and C417.

This sequence belongs to the aconitase/IPM isomerase family. LeuC type 1 subfamily. As to quaternary structure, heterodimer of LeuC and LeuD. Requires [4Fe-4S] cluster as cofactor.

It carries out the reaction (2R,3S)-3-isopropylmalate = (2S)-2-isopropylmalate. It functions in the pathway amino-acid biosynthesis; L-leucine biosynthesis; L-leucine from 3-methyl-2-oxobutanoate: step 2/4. In terms of biological role, catalyzes the isomerization between 2-isopropylmalate and 3-isopropylmalate, via the formation of 2-isopropylmaleate. The protein is 3-isopropylmalate dehydratase large subunit of Variovorax paradoxus (strain S110).